Here is a 449-residue protein sequence, read N- to C-terminus: Phosphoglucosamine mutase (449 aa).

Residue Ser-101 is the Phosphoserine intermediate of the active site. Residues Ser-101, Asp-242, Asp-244, and Asp-246 each contribute to the Mg(2+) site. Residue Ser-101 is modified to Phosphoserine.

The protein belongs to the phosphohexose mutase family. Requires Mg(2+) as cofactor. Post-translationally, activated by phosphorylation.

It catalyses the reaction alpha-D-glucosamine 1-phosphate = D-glucosamine 6-phosphate. Catalyzes the conversion of glucosamine-6-phosphate to glucosamine-1-phosphate. This is Phosphoglucosamine mutase from Bradyrhizobium sp. (strain ORS 278).